The following is a 93-amino-acid chain: Small ribosomal subunit protein uS19 (93 aa).

This sequence belongs to the universal ribosomal protein uS19 family.

Protein S19 forms a complex with S13 that binds strongly to the 16S ribosomal RNA. The chain is Small ribosomal subunit protein uS19 from Tropheryma whipplei (strain TW08/27) (Whipple's bacillus).